The chain runs to 840 residues: UPF0508 protein SCY_2952 (840 aa).

This sequence belongs to the UPF0508 family.

The protein is UPF0508 protein SCY_2952 of Saccharomyces cerevisiae (strain YJM789) (Baker's yeast).